We begin with the raw amino-acid sequence, 39 residues long: MSDFTKFLTTAPVAFILFSSFVFALFIEINRFFPDILTF.

A helical membrane pass occupies residues 7 to 27; that stretch reads FLTTAPVAFILFSSFVFALFI.

The protein belongs to the PsaJ family.

The protein localises to the cellular thylakoid membrane. Its function is as follows. May help in the organization of the PsaE and PsaF subunits. The sequence is that of Photosystem I reaction center subunit IX from Synechococcus sp. (strain JA-3-3Ab) (Cyanobacteria bacterium Yellowstone A-Prime).